The sequence spans 400 residues: Nicotinate phosphoribosyltransferase (400 aa).

H220 is modified (phosphohistidine; by autocatalysis).

The protein belongs to the NAPRTase family. In terms of processing, transiently phosphorylated on a His residue during the reaction cycle. Phosphorylation strongly increases the affinity for substrates and increases the rate of nicotinate D-ribonucleotide production. Dephosphorylation regenerates the low-affinity form of the enzyme, leading to product release.

The catalysed reaction is nicotinate + 5-phospho-alpha-D-ribose 1-diphosphate + ATP + H2O = nicotinate beta-D-ribonucleotide + ADP + phosphate + diphosphate. Its pathway is cofactor biosynthesis; NAD(+) biosynthesis; nicotinate D-ribonucleotide from nicotinate: step 1/1. In terms of biological role, catalyzes the synthesis of beta-nicotinate D-ribonucleotide from nicotinate and 5-phospho-D-ribose 1-phosphate at the expense of ATP. The protein is Nicotinate phosphoribosyltransferase of Salmonella typhimurium (strain LT2 / SGSC1412 / ATCC 700720).